Consider the following 201-residue polypeptide: Cell division protein SepF (201 aa).

A compositionally biased stretch (basic and acidic residues) spans 27 to 38; that stretch reads VQERTSVQRDSR. The disordered stretch occupies residues 27–99; that stretch reads VQERTSVQRD…PRIQNKDSVR (73 aa). Polar residues-rich tracts occupy residues 43–54 and 82–92; these read QEASQRSHMTNS and DNSYQQATPRI.

It belongs to the SepF family. Homodimer. Interacts with FtsZ.

The protein resides in the cytoplasm. Its function is as follows. Cell division protein that is part of the divisome complex and is recruited early to the Z-ring. Probably stimulates Z-ring formation, perhaps through the cross-linking of FtsZ protofilaments. Its function overlaps with FtsA. This chain is Cell division protein SepF, found in Streptococcus agalactiae serotype III (strain NEM316).